The following is a 288-amino-acid chain: ATP synthase gamma chain (288 aa).

Belongs to the ATPase gamma chain family. In terms of assembly, F-type ATPases have 2 components, CF(1) - the catalytic core - and CF(0) - the membrane proton channel. CF(1) has five subunits: alpha(3), beta(3), gamma(1), delta(1), epsilon(1). CF(0) has three main subunits: a, b and c.

The protein resides in the cell inner membrane. Produces ATP from ADP in the presence of a proton gradient across the membrane. The gamma chain is believed to be important in regulating ATPase activity and the flow of protons through the CF(0) complex. The chain is ATP synthase gamma chain from Rickettsia bellii (strain OSU 85-389).